Reading from the N-terminus, the 293-residue chain is MNPIVGSIVALVTPMLEDGSVDYPTLRQLIDWHIAEGTACIGVVGTTGESPTVSVEEHCEIIRVAVEQTAGRVPVMAGAGGNSTREAIELARFAKKVGADCTLSVVPYYNKPSQEGIYQHFRAIAEAVDIPTVLYNVPGRTVADMLPETTLRLAQVPGVIGIKEATGNIERACWLIKQAPAGFSIYSGDDGTAVALMLLGGHGNVSVTANVAPRAMADLCRAAVAGDARTAREIHFKLLGLHKLLFAEPNPTPVKWAMHRLGLCAATMRLPMVPMSAHLEAGLEAAMREAGLL.

A pyruvate-binding site is contributed by Thr-47. The active-site Proton donor/acceptor is the Tyr-135. Residue Lys-163 is the Schiff-base intermediate with substrate of the active site. Pyruvate is bound at residue Val-205.

Belongs to the DapA family. In terms of assembly, homotetramer; dimer of dimers.

Its subcellular location is the cytoplasm. It catalyses the reaction L-aspartate 4-semialdehyde + pyruvate = (2S,4S)-4-hydroxy-2,3,4,5-tetrahydrodipicolinate + H2O + H(+). It functions in the pathway amino-acid biosynthesis; L-lysine biosynthesis via DAP pathway; (S)-tetrahydrodipicolinate from L-aspartate: step 3/4. In terms of biological role, catalyzes the condensation of (S)-aspartate-beta-semialdehyde [(S)-ASA] and pyruvate to 4-hydroxy-tetrahydrodipicolinate (HTPA). This chain is 4-hydroxy-tetrahydrodipicolinate synthase, found in Leptothrix cholodnii (strain ATCC 51168 / LMG 8142 / SP-6) (Leptothrix discophora (strain SP-6)).